Here is a 311-residue protein sequence, read N- to C-terminus: Ribonuclease HIII (311 aa).

Residues 95–311 (MSIVGSDEVG…NTEKAFRLLK (217 aa)) enclose the RNase H type-2 domain. Residues Asp-101, Glu-102, and Asp-206 each contribute to the a divalent metal cation site.

This sequence belongs to the RNase HII family. RnhC subfamily. Mn(2+) is required as a cofactor. It depends on Mg(2+) as a cofactor.

The protein resides in the cytoplasm. The catalysed reaction is Endonucleolytic cleavage to 5'-phosphomonoester.. Endonuclease that specifically degrades the RNA of RNA-DNA hybrids. This chain is Ribonuclease HIII, found in Bacillus cereus (strain ATCC 10987 / NRS 248).